The chain runs to 224 residues: COMM domain-containing protein 5 (224 aa).

Position 2 is an N-acetylserine (Ser-2). Residues 151-215 (HVADFRWRVD…LVLKEMADLE (65 aa)) form the COMM domain.

The protein belongs to the COMM domain-containing protein 5 family. Component of the commander complex consisting of the CCC subcomplex and the retriever subcomplex. Component of the CCC (COMMD/CCDC22/CCDC93) subcomplex consisting of COMMD1, COMMD2, COMMD3, COMMD4, COMMD5, COMMD6, COMMD7, COMMD8, COMMD9, COMMD10, CCDC22 and CCDC93; within the complex forms a heterodimer with COMMD10. Interacts (via COMM domain) with COMMD1 (via COMM domain). Interacts with RELA, RELB, NFKB1/p105. Interacts with CCDC22, CCDC93, SCNN1B, CUL2, CUL3, CUL4A, CUL4B, CUL7. As to expression, highly expressed in heart, stomach, jejunum, kidney, liver, and adrenal gland. Expression was generally higher in adult organs than in fetal tissues, particularly in heart, kidney, and liver.

The protein localises to the cytoplasm. It localises to the nucleus. Scaffold protein in the commander complex that is essential for endosomal recycling of transmembrane cargos; the commander complex is composed of the CCC subcomplex and the retriever subcomplex. May modulate activity of cullin-RING E3 ubiquitin ligase (CRL) complexes. Negatively regulates cell proliferation. Negatively regulates cell cycle G2/M phase transition probably by transactivating p21/CDKN1A through the p53/TP53-independent signaling pathway. Involved in kidney proximal tubule morphogenesis. Down-regulates activation of NF-kappa-B. The protein is COMM domain-containing protein 5 (COMMD5) of Homo sapiens (Human).